The primary structure comprises 603 residues: Myotubularin (603 aa).

The segment covering 1-13 (MASAPTSKYNSHS) has biased composition (polar residues). The interval 1-32 (MASAPTSKYNSHSLENESIKRTSRDGVNRDVG) is disordered. Ser13 and Ser18 each carry phosphoserine. Residues 14–32 (LENESIKRTSRDGVNRDVG) are compositionally biased toward basic and acidic residues. In terms of domain architecture, GRAM spans 29-97 (RDVGETLPRL…GVISRIEKMG (69 aa)). Residues 163–538 (GWTVYNPVEE…RHLELWVNYY (376 aa)) enclose the Myotubularin phosphatase domain. A 1,2-diacyl-sn-glycero-3-phospho-(1D-myo-inositol-3,5-bisphosphate) is bound by residues Asn288, Asn313, and Ile314. A 1,2-diacyl-sn-glycero-3-phospho-(1D-myo-inositol-3-phosphate) contacts are provided by Asn288, Asn313, and Ile314. Cys375 functions as the Phosphocysteine intermediate in the catalytic mechanism. A 1,2-diacyl-sn-glycero-3-phospho-(1D-myo-inositol-3,5-bisphosphate)-binding residues include Ser376, Asp377, Gly378, Trp379, Asp380, Arg381, Lys417, and Arg421. A 1,2-diacyl-sn-glycero-3-phospho-(1D-myo-inositol-3-phosphate)-binding residues include Ser376, Asp377, Gly378, Trp379, Asp380, and Arg381. Arg421 provides a ligand contact to a 1,2-diacyl-sn-glycero-3-phospho-(1D-myo-inositol-3-phosphate). A Phosphothreonine modification is found at Thr495. The tract at residues 580–603 (AKLSDPSASPSSPSQMMPHVQTHF) is disordered. Over residues 583–593 (SDPSASPSSPS) the composition is skewed to low complexity. Ser588 bears the Phosphoserine mark.

Belongs to the protein-tyrosine phosphatase family. Non-receptor class myotubularin subfamily. As to quaternary structure, heterodimer with MTMR12. Interacts with KMT2A/MLL1 (via SET domain). Interacts with DES in skeletal muscle but not in cardiac muscle. Interacts with SPEG.

Its subcellular location is the cytoplasm. The protein resides in the cell membrane. The protein localises to the cell projection. It localises to the filopodium. It is found in the ruffle. Its subcellular location is the late endosome. The protein resides in the myofibril. The protein localises to the sarcomere. The catalysed reaction is a 1,2-diacyl-sn-glycero-3-phospho-(1D-myo-inositol-3-phosphate) + H2O = a 1,2-diacyl-sn-glycero-3-phospho-(1D-myo-inositol) + phosphate. It catalyses the reaction a 1,2-diacyl-sn-glycero-3-phospho-(1D-myo-inositol-3,5-bisphosphate) + H2O = a 1,2-diacyl-sn-glycero-3-phospho-(1D-myo-inositol-5-phosphate) + phosphate. The enzyme catalyses 1,2-dioctanoyl-sn-glycero-3-phospho-(1-D-myo-inositol-3-phosphate) + H2O = 1,2-dioctanoyl-sn-glycero-3-phospho-(1D-myo-inositol) + phosphate. It carries out the reaction 1,2-dioctanoyl-sn-glycero-3-phospho-(1D-myo-inositol-3,5-bisphosphate) + H2O = 1,2-dioctanoyl-sn-glycero-3-phospho-(1D-myo-inositol-5-phosphate) + phosphate. The catalysed reaction is 1,2-dihexadecanoyl-sn-glycero-3-phospho-(1D-myo-inositol-3,5-phosphate) + H2O = 1,2-dihexadecanoyl-sn-glycero-3-phospho-(1D-myo-inositol-5-phosphate) + phosphate. Its activity is regulated as follows. Allosterically activated by phosphatidylinositol 5-phosphate (PI5P). Its function is as follows. Lipid phosphatase which dephosphorylates phosphatidylinositol 3-monophosphate (PI3P) and phosphatidylinositol 3,5-bisphosphate (PI(3,5)P2). Has also been shown to dephosphorylate phosphotyrosine- and phosphoserine-containing peptides. Negatively regulates EGFR degradation through regulation of EGFR trafficking from the late endosome to the lysosome. Plays a role in vacuolar formation and morphology. Regulates desmin intermediate filament assembly and architecture. Plays a role in mitochondrial morphology and positioning. Required for skeletal muscle maintenance but not for myogenesis. In skeletal muscles, stabilizes MTMR12 protein levels. In Bos taurus (Bovine), this protein is Myotubularin.